The following is a 200-amino-acid chain: Coiled-coil domain-containing protein 28B (200 aa).

M1 carries the N-acetylmethionine modification. Residues 1–10 show a composition bias toward basic residues; it reads MEDKKKKRSP. A disordered region spans residues 1–49; it reads MEDKKKKRSPKPCLTQPAQAPGTLRRVPVPTSHSGSLALGLPHLPSPKQ. 2 positions are modified to phosphoserine: S46 and S115. The span at 140–152 shows a compositional bias: acidic residues; it reads GEEEDEEEEEDGV. The tract at residues 140–165 is disordered; that stretch reads GEEEDEEEEEDGVTEGLPEEQKKTMA. A coiled-coil region spans residues 158–189; that stretch reads EEQKKTMADRNLDQLLSNLEDLSNSIQKLHLA.

Interacts with BBS1, BBS2, BBS4, BBS5, BBS6, BBS7 and TTC8/BBS8. Interacts with MAPKAP1/SIN1 isoform 1 and RICTOR. Expressed in the retina, pericardium and limb epithelium.

The protein localises to the cytoplasm. It is found in the cytoskeleton. It localises to the microtubule organizing center. The protein resides in the centrosome. Its function is as follows. Involved in ciliogenesis. Regulates cilia length through its interaction with MAPKAP1/SIN1 but independently of mTORC2 complex. Modulates mTORC2 complex assembly and function, possibly enhances AKT1 phosphorylation. Does not seem to modulate assembly and function of mTORC1 complex. The sequence is that of Coiled-coil domain-containing protein 28B (Ccdc28b) from Mus musculus (Mouse).